A 907-amino-acid chain; its full sequence is Isoleucine--tRNA ligase (907 aa).

The 'HIGH' region signature appears at 57–67 (PFANGKAHMGS). Residue Glu-549 participates in L-isoleucyl-5'-AMP binding. Positions 590–594 (KLSKS) match the 'KMSKS' region motif. ATP is bound at residue Lys-593. Zn(2+) is bound by residues Cys-867, Cys-870, Cys-889, and Cys-892.

The protein belongs to the class-I aminoacyl-tRNA synthetase family. IleS type 1 subfamily. Monomer. Zn(2+) serves as cofactor.

The protein localises to the cytoplasm. The catalysed reaction is tRNA(Ile) + L-isoleucine + ATP = L-isoleucyl-tRNA(Ile) + AMP + diphosphate. Its function is as follows. Catalyzes the attachment of isoleucine to tRNA(Ile). As IleRS can inadvertently accommodate and process structurally similar amino acids such as valine, to avoid such errors it has two additional distinct tRNA(Ile)-dependent editing activities. One activity is designated as 'pretransfer' editing and involves the hydrolysis of activated Val-AMP. The other activity is designated 'posttransfer' editing and involves deacylation of mischarged Val-tRNA(Ile). The polypeptide is Isoleucine--tRNA ligase (Methylacidiphilum infernorum (isolate V4) (Methylokorus infernorum (strain V4))).